We begin with the raw amino-acid sequence, 144 residues long: Large ribosomal subunit protein uL15 (144 aa).

Residues 1-57 (MRLNTLSPAAGSKHAPKRVGRGIGSGLGKTGGRGHKGQKSRSGGKVRPGFEGGQMPL) are disordered. Gly residues predominate over residues 21-31 (RGIGSGLGKTG). The span at 32 to 44 (GRGHKGQKSRSGG) shows a compositional bias: basic residues.

The protein belongs to the universal ribosomal protein uL15 family. As to quaternary structure, part of the 50S ribosomal subunit.

In terms of biological role, binds to the 23S rRNA. The chain is Large ribosomal subunit protein uL15 from Vibrio vulnificus (strain CMCP6).